The following is a 283-amino-acid chain: Release factor glutamine methyltransferase (283 aa).

S-adenosyl-L-methionine contacts are provided by residues 121–125, D144, and N188; that span reads GTGSG. Residue 188–191 coordinates substrate; that stretch reads NPPY.

This sequence belongs to the protein N5-glutamine methyltransferase family. PrmC subfamily.

The catalysed reaction is L-glutaminyl-[peptide chain release factor] + S-adenosyl-L-methionine = N(5)-methyl-L-glutaminyl-[peptide chain release factor] + S-adenosyl-L-homocysteine + H(+). Its function is as follows. Methylates the class 1 translation termination release factors RF1/PrfA and RF2/PrfB on the glutamine residue of the universally conserved GGQ motif. This is Release factor glutamine methyltransferase from Bacillus cereus (strain ATCC 14579 / DSM 31 / CCUG 7414 / JCM 2152 / NBRC 15305 / NCIMB 9373 / NCTC 2599 / NRRL B-3711).